The sequence spans 46 residues: Esculentin-1a/b (46 aa).

An intrachain disulfide couples Cys40 to Cys46.

This sequence belongs to the frog skin active peptide (FSAP) family. Esculentin subfamily. In terms of tissue distribution, expressed by the skin glands.

The protein localises to the secreted. Its function is as follows. Antimicrobial peptide. Stimulates insulin secretion by BRIN-BD11 cells in vitro. Shows hemolytic activity. In Pelophylax ridibundus (Marsh frog), this protein is Esculentin-1a/b.